The primary structure comprises 154 residues: Ribosomal RNA large subunit methyltransferase H (154 aa).

An S-adenosyl-L-methionine-binding site is contributed by glycine 102.

Belongs to the RNA methyltransferase RlmH family. In terms of assembly, homodimer.

It is found in the cytoplasm. The catalysed reaction is pseudouridine(1915) in 23S rRNA + S-adenosyl-L-methionine = N(3)-methylpseudouridine(1915) in 23S rRNA + S-adenosyl-L-homocysteine + H(+). In terms of biological role, specifically methylates the pseudouridine at position 1915 (m3Psi1915) in 23S rRNA. The protein is Ribosomal RNA large subunit methyltransferase H of Caulobacter sp. (strain K31).